The chain runs to 877 residues: Alanine--tRNA ligase (877 aa).

Zn(2+) contacts are provided by His561, His565, Cys669, and His673.

This sequence belongs to the class-II aminoacyl-tRNA synthetase family. The cofactor is Zn(2+).

It is found in the cytoplasm. The catalysed reaction is tRNA(Ala) + L-alanine + ATP = L-alanyl-tRNA(Ala) + AMP + diphosphate. Catalyzes the attachment of alanine to tRNA(Ala) in a two-step reaction: alanine is first activated by ATP to form Ala-AMP and then transferred to the acceptor end of tRNA(Ala). Also edits incorrectly charged Ser-tRNA(Ala) and Gly-tRNA(Ala) via its editing domain. The sequence is that of Alanine--tRNA ligase from Endomicrobium trichonymphae.